The following is a 195-amino-acid chain: Large ribosomal subunit protein uL18 (195 aa).

The protein belongs to the universal ribosomal protein uL18 family. As to quaternary structure, part of the 50S ribosomal subunit. Contacts the 5S and 23S rRNAs.

This is one of the proteins that bind and probably mediate the attachment of the 5S RNA into the large ribosomal subunit, where it forms part of the central protuberance. This is Large ribosomal subunit protein uL18 from Methanococcus vannielii.